Consider the following 724-residue polypeptide: NAD(+) hydrolase SARM1 (724 aa).

A mitochondrion-targeting transit peptide spans Met1–Arg27. Residues Gly24–Gly56 are disordered. Positions Ser36–Ala45 are enriched in low complexity. One copy of the ARM 1 repeat lies at Glu60–Glu100. NAD(+) is bound by residues Trp103, Arg110, Glu149–Arg157, and His190–Lys193. ARM repeat units follow at residues Gln114–Val153, Glu155–Lys193, Glu196–Leu235, Gly237–Asn280, Lys281–Asp314, Ala315–Ala354, and Gln359–Pro402. 2 consecutive SAM domains span residues Trp412–Phe476 and Asn486–Ser548. Residues Ser548 and Ser558 each carry the phosphoserine modification. One can recognise a TIR domain in the interval Asp560–Pro703. Residues Arg569 to Arg570 and Glu599 each bind NAD(+). Glu642 is a catalytic residue. Positions Pro703–Glu716 are enriched in polar residues. The disordered stretch occupies residues Pro703–Pro724.

This sequence belongs to the SARM1 family. In terms of assembly, homooctamer; forms an octameric ring via SAM domains. Interacts with TICAM1/TRIF and thereby interferes with TICAM1/TRIF function. Interacts with SDC2 (via cytoplasmic domain) and MAPK10/JNK3. Post-translationally, phosphorylation at Ser-548 by JNK kinases (MAPK8, MAPK9 and /or MAPK10) enhance the NAD(+) hydrolase (NADase) activity. Phosphorylation at Ser-548 and subsequent activation takes place in response to oxidative stress conditions and inhibits mitochondrial respiration. As to expression, widely expressed in the brain and neurons (at protein level). Expressed in photoreceptor cells of the neural retina.

It is found in the cytoplasm. Its subcellular location is the cell projection. The protein localises to the axon. It localises to the dendrite. The protein resides in the synapse. It is found in the mitochondrion. It catalyses the reaction NAD(+) + H2O = ADP-D-ribose + nicotinamide + H(+). The catalysed reaction is NAD(+) = cyclic ADP-beta-D-ribose + nicotinamide + H(+). It carries out the reaction NADP(+) + H2O = ADP-D-ribose 2'-phosphate + nicotinamide + H(+). Autoinhibited: in the inactive state, the enzymatic TIR domain is held apart by the autoinhibiting ARM repeats. NAD(+)-binding to ARM repeats maintains an inactive state by promoting interaction between ARM repeats and the TIR domain, thereby facilitating inhibition of the enzymatic TIR domain. Following activation, possibly by nicotinamide mononucleotide (NMN), auto-inhibitory interactions are released, allowing self-association of the TIR domains and subsequent activation of the NAD(+) hydrolase (NADase) activity. Self-association of TIR domains is facilitated by the octamer of SAM domains. NAD(+) hydrolase, which plays a key role in axonal degeneration following injury by regulating NAD(+) metabolism. Acts as a negative regulator of MYD88- and TRIF-dependent toll-like receptor signaling pathway by promoting Wallerian degeneration, an injury-induced form of programmed subcellular death which involves degeneration of an axon distal to the injury site. Wallerian degeneration is triggered by NAD(+) depletion: in response to injury, SARM1 is activated and catalyzes cleavage of NAD(+) into ADP-D-ribose (ADPR), cyclic ADPR (cADPR) and nicotinamide; NAD(+) cleavage promoting cytoskeletal degradation and axon destruction. Also able to hydrolyze NADP(+), but not other NAD(+)-related molecules. Can activate neuronal cell death in response to stress. Regulates dendritic arborization through the MAPK4-JNK pathway. Involved in innate immune response: inhibits both TICAM1/TRIF- and MYD88-dependent activation of JUN/AP-1, TRIF-dependent activation of NF-kappa-B and IRF3, and the phosphorylation of MAPK14/p38. The protein is NAD(+) hydrolase SARM1 of Mus musculus (Mouse).